A 104-amino-acid polypeptide reads, in one-letter code: Large ribosomal subunit protein uL23 (104 aa).

This sequence belongs to the universal ribosomal protein uL23 family. Part of the 50S ribosomal subunit. Contacts protein L29, and trigger factor when it is bound to the ribosome.

In terms of biological role, one of the early assembly proteins it binds 23S rRNA. One of the proteins that surrounds the polypeptide exit tunnel on the outside of the ribosome. Forms the main docking site for trigger factor binding to the ribosome. This chain is Large ribosomal subunit protein uL23, found in Burkholderia multivorans (strain ATCC 17616 / 249).